A 272-amino-acid chain; its full sequence is Energy-coupling factor transporter ATP-binding protein EcfA1 (272 aa).

The 235-residue stretch at 5–239 folds into the ABC transporter domain; that stretch reads IKIDNLKYSY…RKALHENGLE (235 aa). 37-44 serves as a coordination point for ATP; it reads GHNGSGKS. The Proton acceptor role is filled by glutamate 163.

The protein belongs to the ABC transporter superfamily. Energy-coupling factor EcfA family. As to quaternary structure, forms a stable energy-coupling factor (ECF) transporter complex probably composed of 2 membrane-embedded substrate-binding proteins (S component), 2 ATP-binding proteins (A component) and 2 transmembrane proteins (T component). This complex interacts with a number of substrate-specific components, including FolT, PanT and RibU for 5-formyltetrahydrofolate, pantothenate and riboflavin respectively.

The protein resides in the cell membrane. In terms of biological role, ATP-binding (A) component of a common energy-coupling factor (ECF) ABC-transporter complex. Unlike classic ABC transporters this ECF transporter provides the energy necessary to transport a number of different substrates including 5-formyltetrahydrofolate, pantothenate and riboflavin. Expression of the complex plus FolT in E.coli allows 5-formyltetrahydrofolate uptake; 5-formyltetrahydrofolate is not taken up in the absence of FolT or the EcfA1A2T complex. The sequence is that of Energy-coupling factor transporter ATP-binding protein EcfA1 from Leuconostoc mesenteroides subsp. mesenteroides (strain ATCC 8293 / DSM 20343 / BCRC 11652 / CCM 1803 / JCM 6124 / NCDO 523 / NBRC 100496 / NCIMB 8023 / NCTC 12954 / NRRL B-1118 / 37Y).